The sequence spans 917 residues: Nitrate reductase [NADH] 2 (917 aa).

A disordered region spans residues 1 to 72; the sequence is MAASVDNRQY…SEDENETHNS (72 aa). A compositionally biased stretch (polar residues) spans 37–47; it reads AHQNQTTNQTV. A compositionally biased stretch (acidic residues) spans 57–67; it reads DDEDVSSEDEN. Cysteine 191 contacts Mo-molybdopterin. The Cytochrome b5 heme-binding domain maps to 542-617; that stretch reads AKMYSMSEVK…LEDYRIGELI (76 aa). Heme is bound by residues histidine 577 and histidine 600. The 113-residue stretch at 660–772 folds into the FAD-binding FR-type domain; the sequence is RAKVPVQLVE…KGPLGHVEYL (113 aa). Residues 712-715, 729-733, phenylalanine 734, phenylalanine 741, 746-748, and threonine 799 each bind FAD; these read RAYT, VVKIY, and LMS.

This sequence belongs to the nitrate reductase family. In terms of assembly, homodimer. Requires FAD as cofactor. Heme serves as cofactor. It depends on Mo-molybdopterin as a cofactor. As to expression, root, leaf, and shoot.

It carries out the reaction nitrite + NAD(+) + H2O = nitrate + NADH + H(+). Its function is as follows. Nitrate reductase is a key enzyme involved in the first step of nitrate assimilation in plants, fungi and bacteria. This is Nitrate reductase [NADH] 2 (NIA2) from Arabidopsis thaliana (Mouse-ear cress).